Reading from the N-terminus, the 277-residue chain is 3-methyl-2-oxobutanoate hydroxymethyltransferase (277 aa).

Residues D53 and D96 each contribute to the Mg(2+) site. 3-methyl-2-oxobutanoate contacts are provided by residues 53-54 (DS), D96, and K126. E128 contacts Mg(2+). E195 serves as the catalytic Proton acceptor.

The protein belongs to the PanB family. As to quaternary structure, homodecamer; pentamer of dimers. The cofactor is Mg(2+).

The protein localises to the cytoplasm. The enzyme catalyses 3-methyl-2-oxobutanoate + (6R)-5,10-methylene-5,6,7,8-tetrahydrofolate + H2O = 2-dehydropantoate + (6S)-5,6,7,8-tetrahydrofolate. The protein operates within cofactor biosynthesis; (R)-pantothenate biosynthesis; (R)-pantoate from 3-methyl-2-oxobutanoate: step 1/2. Functionally, catalyzes the reversible reaction in which hydroxymethyl group from 5,10-methylenetetrahydrofolate is transferred onto alpha-ketoisovalerate to form ketopantoate. The polypeptide is 3-methyl-2-oxobutanoate hydroxymethyltransferase (Chlorobaculum tepidum (strain ATCC 49652 / DSM 12025 / NBRC 103806 / TLS) (Chlorobium tepidum)).